The sequence spans 205 residues: uncharacterized protein (205 aa).

Residues Ser119 and His160 each act as charge relay system in the active site.

This sequence belongs to the peptidase S51 family.

This is an uncharacterized protein from Listeria monocytogenes serovar 1/2a (strain ATCC BAA-679 / EGD-e).